An 80-amino-acid polypeptide reads, in one-letter code: Putative DNA-directed RNA polymerase subunit omega (80 aa).

This sequence belongs to the RNA polymerase subunit omega family.

It localises to the plastid. Its subcellular location is the chloroplast. It carries out the reaction RNA(n) + a ribonucleoside 5'-triphosphate = RNA(n+1) + diphosphate. Its function is as follows. May be involved in RNA polymerase activity. The chain is Putative DNA-directed RNA polymerase subunit omega from Gracilaria tenuistipitata var. liui (Red alga).